The chain runs to 102 residues: RNA-binding protein Hfq (102 aa).

In terms of domain architecture, Sm spans 9 to 68 (DPFLNALRRERVPVSIYLVNGIKLQGQIESFDQFVILLKNTVSQMVYKHAISTVVPSRPV). Residues 63–102 (VPSRPVSHHSNNTGGGSNNYHHGSSPAPSSQPQQDSADAE) form a disordered region. Positions 70 to 102 (HHSNNTGGGSNNYHHGSSPAPSSQPQQDSADAE) are enriched in low complexity.

Belongs to the Hfq family. Homohexamer.

Functionally, RNA chaperone that binds small regulatory RNA (sRNAs) and mRNAs to facilitate mRNA translational regulation in response to envelope stress, environmental stress and changes in metabolite concentrations. Also binds with high specificity to tRNAs. The sequence is that of RNA-binding protein Hfq from Erwinia tasmaniensis (strain DSM 17950 / CFBP 7177 / CIP 109463 / NCPPB 4357 / Et1/99).